The following is a 124-amino-acid chain: Fluoride-specific ion channel FluC (124 aa).

The next 4 membrane-spanning stretches (helical) occupy residues 4–24 (VLFV…ISLL), 35–55 (FGTL…FALG), 62–82 (PEFK…FSTF), and 95–115 (LVKA…VVYL). Residues G74 and T77 each contribute to the Na(+) site.

This sequence belongs to the fluoride channel Fluc/FEX (TC 1.A.43) family.

The protein localises to the cell inner membrane. The enzyme catalyses fluoride(in) = fluoride(out). Na(+) is not transported, but it plays an essential structural role and its presence is essential for fluoride channel function. Fluoride-specific ion channel. Important for reducing fluoride concentration in the cell, thus reducing its toxicity. The sequence is that of Fluoride-specific ion channel FluC from Shewanella pealeana (strain ATCC 700345 / ANG-SQ1).